The chain runs to 165 residues: Neuropeptide W (165 aa).

The N-terminal stretch at 1 to 32 (MAWRPGERGAPASRPRLALLLLLLLLPLPSGA) is a signal peptide. Residues 65–165 (ALRAAAGPLA…GLPCLAPGPF (101 aa)) constitute a propeptide that is removed on maturation. The disordered stretch occupies residues 106–165 (SQAGIPVRAPRSPRAPEPALEPESLDFSGAGQRLRRDVSRPAVDPAANRLGLPCLAPGPF). Residues 113 to 127 (RAPRSPRAPEPALEP) show a composition bias toward low complexity. Residue serine 133 is glycosylated (O-linked (Xyl...) (chondroitin sulfate) serine).

Belongs to the neuropeptide B/W family. As to expression, detected in cerebrospinal fluid and urine (at protein level). Detected at high levels in the substantia nigra, fetal kidney and trachea; at lower levels in testis, uterus, ovary and placenta. Not detectable in many regions of the central nervous system. Also detected at high levels in lymphoblastic leukemia and colorectal adenocarcinoma.

Its subcellular location is the secreted. Functionally, plays a regulatory role in the organization of neuroendocrine signals accessing the anterior pituitary gland. Stimulates water drinking and food intake. May play a role in the hypothalamic response to stress. NPW23 activates GPR7 and GPR8 more efficiently than NPW30. The protein is Neuropeptide W (NPW) of Homo sapiens (Human).